The sequence spans 1101 residues: Selenocysteine insertion sequence-binding protein 2-like (1101 aa).

Disordered stretches follow at residues 154 to 206 (LGQV…AGPD), 240 to 295 (LWKS…PDSG), 320 to 387 (QKKP…SESL), 884 to 1010 (TSDG…ISVE), and 1030 to 1101 (TLQL…TQTT). Residues 255 to 265 (AESSSEQGASE) show a composition bias toward low complexity. Phosphoserine is present on serine 276. A compositionally biased stretch (polar residues) spans 327–346 (KNQTFSRGGRQTEQRNNSQV). Basic and acidic residues-rich tracts occupy residues 356-371 (SSERRQNLQKRPDNKH) and 892-908 (ENEKEVSCKHSTSEKPS). Residues 925–939 (ATGSTTSATSAGKST) are compositionally biased toward low complexity. A compositionally biased stretch (basic and acidic residues) spans 940–950 (ASDKEEVKPDD). Residues 954 to 964 (ASQQSTETGSL) are compositionally biased toward polar residues. Over residues 988–1002 (LEEEEDEDEEEEEDY) the composition is skewed to acidic residues. The span at 1030 to 1039 (TLQLGKTLNG) shows a compositional bias: polar residues. Residues 1040–1057 (SEEDNVEQSGEEEAEAPE) are compositionally biased toward acidic residues. The span at 1070–1087 (ADQQASPGQQKSSNCSSL) shows a compositional bias: polar residues.

In terms of biological role, binds SECIS (Sec insertion sequence) elements present on selenocysteine (Sec) protein mRNAs, but does not promote Sec incorporation into selenoproteins in vitro. This chain is Selenocysteine insertion sequence-binding protein 2-like (SECISBP2L), found in Homo sapiens (Human).